The primary structure comprises 543 residues: CTP synthase (543 aa).

The tract at residues Met-1 to Ile-265 is amidoligase domain. Ser-13 serves as a coordination point for CTP. Ser-13 contributes to the UTP binding site. ATP is bound at residue Ser-14–Leu-19. Tyr-54 is a binding site for L-glutamine. Residue Asp-71 participates in ATP binding. Residues Asp-71 and Glu-139 each coordinate Mg(2+). CTP is bound by residues Asp-146–Glu-148, Lys-186–Gln-191, and Lys-222. UTP contacts are provided by residues Lys-186–Gln-191 and Lys-222. Arg-238–Ala-240 is an ATP binding site. The Glutamine amidotransferase type-1 domain occupies Thr-291–Leu-542. Position 353 (Gly-353) interacts with L-glutamine. Cys-380 acts as the Nucleophile; for glutamine hydrolysis in catalysis. Residues Phe-381–Gln-384, Glu-404, and Arg-470 each bind L-glutamine. Catalysis depends on residues His-515 and Glu-517.

This sequence belongs to the CTP synthase family. As to quaternary structure, homotetramer.

It carries out the reaction UTP + L-glutamine + ATP + H2O = CTP + L-glutamate + ADP + phosphate + 2 H(+). The enzyme catalyses L-glutamine + H2O = L-glutamate + NH4(+). The catalysed reaction is UTP + NH4(+) + ATP = CTP + ADP + phosphate + 2 H(+). The protein operates within pyrimidine metabolism; CTP biosynthesis via de novo pathway; CTP from UDP: step 2/2. With respect to regulation, allosterically activated by GTP, when glutamine is the substrate; GTP has no effect on the reaction when ammonia is the substrate. The allosteric effector GTP functions by stabilizing the protein conformation that binds the tetrahedral intermediate(s) formed during glutamine hydrolysis. Inhibited by the product CTP, via allosteric rather than competitive inhibition. Catalyzes the ATP-dependent amination of UTP to CTP with either L-glutamine or ammonia as the source of nitrogen. Regulates intracellular CTP levels through interactions with the four ribonucleotide triphosphates. The chain is CTP synthase from Rhodopseudomonas palustris (strain HaA2).